We begin with the raw amino-acid sequence, 1044 residues long: Translation initiation factor IF-2 (1044 aa).

Residues 31–425 (VRSASSTVEP…RKSKRAKRQE (395 aa)) form a disordered region. 2 stretches are compositionally biased toward pro residues: residues 77-98 (GPAP…PQPA) and 106-116 (APAPAPAPRPA). A compositionally biased stretch (low complexity) spans 117-148 (EPAANPAPAAPPAFQAPAPAPAERPAAAQRPA). Residues 168–185 (GGPGQGPRPGARPGGPGA) are compositionally biased toward gly residues. Basic and acidic residues predominate over residues 204-247 (GPGDRPERSERPDRGDRPQGDRPRSDRPQGERQQGDRPQGDRPG). A compositionally biased stretch (low complexity) spans 285 to 304 (GGAPRPGNNPFASNQGMPRP). Residues 305–328 (QGGPRPTPAGPGGPRPGGPRPNPG) show a composition bias toward pro residues. Positions 329-338 (MMPARPTVGR) are enriched in low complexity. Residues 339–409 (PGAGPGAGRP…GTQGAFGRAG (71 aa)) show a composition bias toward gly residues. Basic residues predominate over residues 413–422 (VRGRKSKRAK). Residues 537 to 709 (ARPPVVTVMG…VLLTADASLD (173 aa)) enclose the tr-type G domain. Residues 546 to 553 (GHVDHGKT) are G1. 546-553 (GHVDHGKT) lines the GTP pocket. Residues 571 to 575 (GITQH) are G2. The G3 stretch occupies residues 596–599 (DTPG). Residues 596 to 600 (DTPGH) and 650 to 653 (NKVD) contribute to the GTP site. The segment at 650-653 (NKVD) is G4. A G5 region spans residues 686–688 (SAR).

It belongs to the TRAFAC class translation factor GTPase superfamily. Classic translation factor GTPase family. IF-2 subfamily.

It is found in the cytoplasm. In terms of biological role, one of the essential components for the initiation of protein synthesis. Protects formylmethionyl-tRNA from spontaneous hydrolysis and promotes its binding to the 30S ribosomal subunits. Also involved in the hydrolysis of GTP during the formation of the 70S ribosomal complex. This is Translation initiation factor IF-2 from Kineococcus radiotolerans (strain ATCC BAA-149 / DSM 14245 / SRS30216).